Reading from the N-terminus, the 947-residue chain is MTPLSSPLSQYWQTVVERLPEGFTETSLSAQAKSVLTFSDFALDSVIAHPEWLAELESASPQADEWRHYAGWLQEALAGVCDDASLMRELRFFRRRIMVRIAWAQTLSLVDDETILQQLSHLAETLIVGARDWLYAACCREWGTPCNPQGVPQPLLILGMGKLGGGELNFSSDIDLIFAWPEHGETRGGRRELDNAQFFTRLGQRLIKALDQPTMDGFVYRVDMRLRPFGDSGPLVLSFAALEDYYQEQGRDWERYAMVKARLMGDNDDAWSRELRAMLRPFVFRRYIDFSVIQSLRNMKGMIAREVRRRGLKDNIKLGAGGIREIEFIVQVFQLIRGGREPSLQSRSLLPTLDAIAALHLLPENDVAQLRVAYLFLRRLENLLQSINDEQTQTLPADDLNRARLAWGMKAENWPQLVGELTDHMANVRRVFNELIGDDEADTPQEEERSEPWREVWQDALQEDDSTPVLAHLADEDRRQVLTLIADFRKELDKRPIGPRGRQVLDQLMPHLLADVCSREDAAVTLSRITPLLAGIVTRTTYLELLSEFPGALKHLIMLCAASPMIASQLARYPLLLDELLDPGTLYQPTATDAYRDELRQYLLRVPEEDEEQQLEALRQFKQAQLLRIAAADIAGTLPVMKVSDHLTWLAEAMIDAVVQQAWTQMVARYGQPAHLDERQGRGFAVVGYGKLGGWELGYSSDLDLIFLHDCPMDVMTNGEREIDGRQFYLRLAQRIMHLFSTRTSSGILYEVDARLRPSGAAGMLVTSADAFADYQQHEAWTWEHQALVRARVVYGDPQLTSQFDTVRRTIMTTARDGKTLQTEVREMREKMRAHLGNKHRDRFDIKADEGGITDIEFIAQYLVLRYAHEKPKLTRWSDNVRILELLAQNGIMDEHEAQALTVAYTTLRDELHHLALQELPGHVAQTCFSKERALVQASWRKWLVAV.

The segment at 1-440 (MTPLSSPLSQ…VFNELIGDDE (440 aa)) is adenylyl removase. Positions 450–947 (SEPWREVWQD…ASWRKWLVAV (498 aa)) are adenylyl transferase.

It belongs to the GlnE family. It depends on Mg(2+) as a cofactor.

It catalyses the reaction [glutamine synthetase]-O(4)-(5'-adenylyl)-L-tyrosine + phosphate = [glutamine synthetase]-L-tyrosine + ADP. It carries out the reaction [glutamine synthetase]-L-tyrosine + ATP = [glutamine synthetase]-O(4)-(5'-adenylyl)-L-tyrosine + diphosphate. Involved in the regulation of glutamine synthetase GlnA, a key enzyme in the process to assimilate ammonia. When cellular nitrogen levels are high, the C-terminal adenylyl transferase (AT) inactivates GlnA by covalent transfer of an adenylyl group from ATP to specific tyrosine residue of GlnA, thus reducing its activity. Conversely, when nitrogen levels are low, the N-terminal adenylyl removase (AR) activates GlnA by removing the adenylyl group by phosphorolysis, increasing its activity. The regulatory region of GlnE binds the signal transduction protein PII (GlnB) which indicates the nitrogen status of the cell. In Salmonella paratyphi B (strain ATCC BAA-1250 / SPB7), this protein is Bifunctional glutamine synthetase adenylyltransferase/adenylyl-removing enzyme.